A 211-amino-acid polypeptide reads, in one-letter code: Cell division protein SepF (211 aa).

A compositionally biased stretch (acidic residues) spans 15–26 (DTDEVNEVEEEV). Positions 15-111 (DTDEVNEVEE…ETYQAQTTVQ (97 aa)) are disordered. 3 stretches are compositionally biased toward polar residues: residues 44-57 (IPSQ…QNPA), 64-81 (ARSQ…PNRQ), and 91-111 (RESV…TTVQ).

This sequence belongs to the SepF family. Homodimer. Interacts with FtsZ.

The protein localises to the cytoplasm. Its function is as follows. Cell division protein that is part of the divisome complex and is recruited early to the Z-ring. Probably stimulates Z-ring formation, perhaps through the cross-linking of FtsZ protofilaments. Its function overlaps with FtsA. This Streptococcus uberis (strain ATCC BAA-854 / 0140J) protein is Cell division protein SepF.